The chain runs to 242 residues: Small ribosomal subunit protein uS2 (242 aa).

The protein belongs to the universal ribosomal protein uS2 family.

The protein is Small ribosomal subunit protein uS2 of Idiomarina loihiensis (strain ATCC BAA-735 / DSM 15497 / L2-TR).